Consider the following 213-residue polypeptide: MKRKTAVKWLAVLAGAGLLYWGNKTYLNVSPKEIRVWVLSFGVFAPLMFIGISIVRPLVLFPVSVISIAGGLAFGPLLGTLYTLFGSMCASAVSFFAAGLFSAKKNGHYERLEAIQKQMEDNGFFYIFLLRILPINFDFVSYAAGLSNVKALPYFAATAVGIIPGTIALNVLGASFLAGNLPAFFMVLALYIVFISLPFIFRKKMQNLFQESN.

A run of 6 helical transmembrane segments spans residues 9–29 (WLAVLAGAGLLYWGNKTYLNV), 34–54 (IRVWVLSFGVFAPLMFIGISI), 58–78 (LVLFPVSVISIAGGLAFGPLL), 81–101 (LYTLFGSMCASAVSFFAAGLF), 159–179 (AVGIIPGTIALNVLGASFLAG), and 181–201 (LPAFFMVLALYIVFISLPFIF).

This sequence belongs to the TVP38/TMEM64 family.

It localises to the cell membrane. This is TVP38/TMEM64 family membrane protein YtxB (ytxB) from Bacillus subtilis (strain 168).